The following is a 101-amino-acid chain: Pterin-4-alpha-carbinolamine dehydratase (101 aa).

It belongs to the pterin-4-alpha-carbinolamine dehydratase family.

The catalysed reaction is (4aS,6R)-4a-hydroxy-L-erythro-5,6,7,8-tetrahydrobiopterin = (6R)-L-erythro-6,7-dihydrobiopterin + H2O. The chain is Pterin-4-alpha-carbinolamine dehydratase (Pcd) from Drosophila virilis (Fruit fly).